A 410-amino-acid chain; its full sequence is FBD-associated F-box protein At5g38590 (410 aa).

Positions 1-47 (MDKINGLPDDLLVKILSYVPTDIAVSTSILSKRWEFLWMWLPNLDYT) constitute an F-box domain. The FBD domain occupies 335–385 (GWNQPSSVPECLLSSLQIFKWPQYLGRPEDRDIAVYILKNARHLKKTTILA).

The sequence is that of FBD-associated F-box protein At5g38590 from Arabidopsis thaliana (Mouse-ear cress).